The sequence spans 2052 residues: Genome polyprotein (2052 aa).

2 short sequence motifs ((L)YPX(n)L motif) span residues 167 to 171 (YPHGL) and 200 to 205 (YPVWEL). Positions 502–522 (TVSTEQNVPDPQVGIKGKANR) are disordered. The segment at 760-830 (MMSRIAAGDL…PRKMKGLFSQ (71 aa)) is involved in P1-2A pentamerization. Residues 1005-1025 (TVEIINIVLCFIKSGILLYVI) form a helical membrane-spanning segment. The interval 1037–1064 (IGLLRVMNYADIGCSVISCGKVFSKMLE) is membrane-penetrating ability. Residues 1121-1146 (KKKDVLNILKDNQQKIEKAIEEADNF) adopt a coiled-coil conformation. Residues 1296–1316 (WVAVGAAVGILGLLVGGWFVY) form a helical membrane-spanning segment. The residue at position 1333 (Tyr1333) is an O-(5'-phospho-RNA)-tyrosine. One can recognise a Peptidase C3 domain in the interval 1348 to 1562 (DPVESQSTLE…VAKLITQEMF (215 aa)). Catalysis depends on for protease 3C activity residues His1397, Asp1437, and Cys1525. The RdRp catalytic domain occupies 1810 to 1931 (DVGLDLDFSA…VFSRDVQIDN (122 aa)).

Belongs to the picornaviridae polyprotein family. In terms of assembly, homodimer. Homomultimer; probably interacts with membranes in a multimeric form. Seems to assemble into amyloid-like fibers. As to quaternary structure, homodimer. Monomer. Interacts with protein 3CD. Interacts with host ACBD3. In terms of assembly, interacts with protein 3AB. As to quaternary structure, interacts with human MAVS. Homodimer; disulfide-linked. In terms of assembly, homopentamer. Homooligomer. As to quaternary structure, interacts with capsid protein VP2. Interacts with capsid protein VP3. Interacts with capsid protein VP1. Interacts with capsid protein VP3. In terms of assembly, interacts with capsid protein VP1. Interacts with capsid protein VP2. In terms of processing, specific enzymatic cleavages by viral protease in vivo yield a variety of precursors and mature proteins. Polyprotein processing intermediates are produced, such as P1-2A which is a functional precursor of the structural proteins, VP0 which is a VP4-VP2 precursor, VP1-2A precursor, 3ABC precursor which is a stable and catalytically active precursor of 3A, 3B and 3C proteins, 3AB and 3CD precursors. The assembly signal 2A is removed from VP1-2A by a host protease, possibly host Cathepsin L. This cleavage occurs over a region of 3 amino-acids probably generating VP1 proteins with heterogeneous C-termini. During virion maturation, immature virions are rendered infectious following cleavage of VP0 into VP4 and VP2. This maturation seems to be an autocatalytic event triggered by the presence of RNA in the capsid and is followed by a conformational change of the particle. Post-translationally, the assembly signal 2A is removed from VP1-2A by a host protease, possibly host Cathepsin L in naked virions. This cleavage does not occur in enveloped virions. This cleavage occurs over a region of 3 amino-acids probably generating VP1 proteins with heterogeneous C-termini. In terms of processing, VPg is uridylylated prior to priming replication into VPg-pUpU. Unlike other picornaviruses, does not seem to be myristoylated.

Its subcellular location is the virion. It is found in the host endosome. The protein localises to the host multivesicular body. The protein resides in the host membrane. It localises to the host mitochondrion outer membrane. Its subcellular location is the host cytoplasm. It is found in the host cytoplasmic vesicle membrane. It carries out the reaction RNA(n) + a ribonucleoside 5'-triphosphate = RNA(n+1) + diphosphate. The catalysed reaction is a ribonucleoside 5'-triphosphate + H2O = a ribonucleoside 5'-diphosphate + phosphate + H(+). The enzyme catalyses Selective cleavage of Gln-|-Gly bond in the poliovirus polyprotein. In other picornavirus reactions Glu may be substituted for Gln, and Ser or Thr for Gly.. Its function is as follows. Capsid proteins VP1, VP2, and VP3 form a closed capsid enclosing the viral positive strand RNA genome. All these proteins contain a beta-sheet structure called beta-barrel jelly roll. Together they form an icosahedral capsid (T=3) composed of 60 copies of each VP1, VP2, and VP3, with a diameter of approximately 300 Angstroms. VP1 is situated at the 12 fivefold axes, whereas VP2 and VP3 are located at the quasi-sixfold axes. The naked capsid interacts with the host receptor HAVCR1 to provide virion attachment to and probably entry into the target cell. VP0 precursor is a component of the immature procapsids. Functionally, plays a role in the assembly of the 12 pentamers into an icosahedral structure. Has not been detected in mature virions, supposedly owing to its small size. In terms of biological role, precursor component of immature procapsids that corresponds to an extended form of the structural protein VP1. After maturation, possibly by the host Cathepsin L, the assembly signal 2A is cleaved to give rise to the mature VP1 protein. Its function is as follows. Functions as a viroporin. Affects membrane integrity and causes an increase in membrane permeability. Involved in host intracellular membrane rearrangements probably to give rise to the viral factories. Does not disrupt calcium homeostasis or glycoprotein trafficking. Antagonizes the innate immune response of the host by suppressing IFN-beta synthesis, which it achieves by interfering with the RIG-I/IFIH1 pathway. Affects membrane integrity and causes an increase in membrane permeability. Functionally, associates with and induces structural rearrangements of intracellular membranes. Displays RNA-binding activity. In terms of biological role, the precursor 3ABC is targeted to the mitochondrial membrane where protease 3C activity cleaves and inhibits the host antiviral protein MAVS, thereby disrupting activation of IRF3 through the IFIH1/MDA5 pathway. In vivo, the protease activity of 3ABC precursor is more efficient in cleaving the 2BC precursor than that of protein 3C. The 3ABC precursor may therefore play a role in the proteolytic processing of the polyprotein. Possible viroporin. Its function is as follows. Interacts with the 3CD precursor and with RNA structures found at both the 5'- and 3'-termini of the viral genome. Since the 3AB precursor contains the hydrophobic domain 3A, it probably anchors the whole viral replicase complex to intracellular membranes on which viral RNA synthesis occurs. May serve as membrane anchor to the 3AB and 3ABC precursors via its hydrophobic domain. May interact with RNA. Functionally, acts as a primer for viral RNA replication and remains covalently bound to viral genomic RNA. VPg is uridylylated prior to priming replication into VPg-pUpU. The VPg-pUpU is then used as primer on the genomic RNA poly(A) by the RNA-dependent RNA polymerase to replicate the viral genome. In terms of biological role, cysteine protease that generates mature viral proteins from the precursor polyprotein. In addition to its proteolytic activity, it binds to viral RNA, and thus influences viral genome replication. RNA and substrate bind cooperatively to the protease. Cleaves IKBKG/NEMO to impair innate immune signaling. Cleaves host PABPC1 which may participate in the switch of viral translation to RNA synthesis. Its function is as follows. Interacts with the 3AB precursor and with RNA structures found at both the 5'- and 3'-termini of the viral genome. Disrupts TLR3 signaling by degrading the host adapter protein TICAM1/TRIF. RNA-directed RNA polymerase 3D-POL replicates genomic and antigenomic RNA by recognizing replications specific signals. The protein is Genome polyprotein of Homo sapiens (Human).